The following is a 102-amino-acid chain: Small ribosomal subunit protein uS10 (102 aa).

It belongs to the universal ribosomal protein uS10 family. In terms of assembly, part of the 30S ribosomal subunit.

Involved in the binding of tRNA to the ribosomes. This is Small ribosomal subunit protein uS10 from Geotalea daltonii (strain DSM 22248 / JCM 15807 / FRC-32) (Geobacter daltonii).